Consider the following 426-residue polypeptide: C4-dicarboxylate transport protein (426 aa).

The next 8 helical transmembrane spans lie at 4–24 (SIFTSLYLQVLVAITIGILLG), 44–64 (LIKMIIAPVIFCTVVTGIAGM), 76–96 (IALLYFEVVSTIALIIGLVVV), 142–162 (IGAFASGNILQVLLFAVMFGF), 184–204 (VIFGVINMIMKLAPIGAFGAM), 222–242 (LILCFYITCALFVVLVLGSIA), 326–346 (IWHQVTLLVVLLLSSKGAAGV), and 352–372 (IVLAATLSAVGHLPVAGLALI).

This sequence belongs to the dicarboxylate/amino acid:cation symporter (DAACS) (TC 2.A.23) family.

The protein localises to the cell inner membrane. Responsible for the transport of dicarboxylates such as succinate, fumarate, and malate from the periplasm across the membrane. In Edwardsiella ictaluri (strain 93-146), this protein is C4-dicarboxylate transport protein.